The primary structure comprises 363 residues: MTCQAFASSDNFVPLNSDSSPSLPLIMHHSAGECLPVSNHATNVVSTVPSVLSLIQTPKCSHFHFAMMTSGNVSAGLHYSVPSCHYGNQASTYGVMAGIKPATPEMLSASLSQSRILQTCSMPHPNVVNGVSTLQSSLTPCLYKFPEHALSASSCALGHSFTPMHQTLLSDDPTASDFKQEFRRKSKSVEEPVDMDSPEIRELEKFANEFKLRRIKLGYTQTNVGEALAAVHGSEFSQTTICRFENLQLSFKNACKLKSILSKWLEEAEQVGALYNEKVGVNERKRKRRTTISISAKEALERHFGEQSKPSSQEIMRMAEGLNLEKEVVRVWFCNRRQREKRVKTSLHQNAFSSIIKEHHECR.

Residues 5-13 carry the 9aaTAD motif; sequence AFASSDNFV. The region spanning 195–269 is the POU-specific domain; it reads MDSPEIRELE…ILSKWLEEAE (75 aa). Residues 285-344 constitute a DNA-binding region (homeobox); the sequence is KRKRRTTISISAKEALERHFGEQSKPSSQEIMRMAEGLNLEKEVVRVWFCNRRQREKRVK.

This sequence belongs to the POU transcription factor family. Class-1 subfamily. In terms of tissue distribution, pituitary gland.

Its subcellular location is the nucleus. Its function is as follows. Transcription factor that activates growth hormone and prolactin genes. Specifically binds to the consensus sequence 5'-TAAAT-3'. In Gallus gallus (Chicken), this protein is Pituitary-specific positive transcription factor 1 (POU1F1).